The sequence spans 317 residues: Thymidylate synthase (317 aa).

DUMP is bound by residues R40 and 167 to 168 (RR). C187 (nucleophile) is an active-site residue. DUMP contacts are provided by residues 216–219 (RSCD), N227, and 257–259 (HVY). D219 provides a ligand contact to (6R)-5,10-methylene-5,6,7,8-tetrahydrofolate.

This sequence belongs to the thymidylate synthase family. Homodimer.

The enzyme catalyses dUMP + (6R)-5,10-methylene-5,6,7,8-tetrahydrofolate = 7,8-dihydrofolate + dTMP. Its pathway is pyrimidine metabolism; dTTP biosynthesis. The sequence is that of Thymidylate synthase (TMP1) from Cryptococcus neoformans var. neoformans serotype D (strain B-3501A) (Filobasidiella neoformans).